The chain runs to 220 residues: GTP cyclohydrolase 1 (220 aa).

Zn(2+) contacts are provided by Cys109, His112, and Cys180.

Belongs to the GTP cyclohydrolase I family. As to quaternary structure, homomer.

It carries out the reaction GTP + H2O = 7,8-dihydroneopterin 3'-triphosphate + formate + H(+). It participates in cofactor biosynthesis; 7,8-dihydroneopterin triphosphate biosynthesis; 7,8-dihydroneopterin triphosphate from GTP: step 1/1. The chain is GTP cyclohydrolase 1 from Edwardsiella ictaluri (strain 93-146).